Here is an 83-residue protein sequence, read N- to C-terminus: Exodeoxyribonuclease 7 small subunit (83 aa).

Belongs to the XseB family. As to quaternary structure, heterooligomer composed of large and small subunits.

The protein localises to the cytoplasm. It carries out the reaction Exonucleolytic cleavage in either 5'- to 3'- or 3'- to 5'-direction to yield nucleoside 5'-phosphates.. In terms of biological role, bidirectionally degrades single-stranded DNA into large acid-insoluble oligonucleotides, which are then degraded further into small acid-soluble oligonucleotides. The sequence is that of Exodeoxyribonuclease 7 small subunit from Allorhizobium ampelinum (strain ATCC BAA-846 / DSM 112012 / S4) (Agrobacterium vitis (strain S4)).